We begin with the raw amino-acid sequence, 372 residues long: DNA-directed RNA polymerase subunit alpha (372 aa).

The alpha N-terminal domain (alpha-NTD) stretch occupies residues 1–268 (MIFDEDSNSV…DQFQPFINFD (268 aa)). The segment at 280 to 372 (KDALPYDSNL…ESLSKQYSEE (93 aa)) is alpha C-terminal domain (alpha-CTD).

This sequence belongs to the RNA polymerase alpha chain family. In terms of assembly, homodimer. The RNAP catalytic core consists of 2 alpha, 1 beta, 1 beta' and 1 omega subunit. When a sigma factor is associated with the core the holoenzyme is formed, which can initiate transcription.

It carries out the reaction RNA(n) + a ribonucleoside 5'-triphosphate = RNA(n+1) + diphosphate. Its function is as follows. DNA-dependent RNA polymerase catalyzes the transcription of DNA into RNA using the four ribonucleoside triphosphates as substrates. The sequence is that of DNA-directed RNA polymerase subunit alpha from Ehrlichia canis (strain Jake).